The sequence spans 833 residues: Vacuolar protein sorting-associated protein 16 homolog (833 aa).

Belongs to the VPS16 family. Component of the homotypic fusion and vacuole protein sorting (HOPS) complex, composed of Vps16A, car/Vps33A, dor/Vps18, Vps39, Vps11 and lt/Vps41. Interacts with Syx17 (via SNARE domain); the interaction may involve multiple components of the HOPS complex and may promote assembly of the Syx17-Snap29-Vamp7 trans-SNARE complex. Component of the class C core vacuole/endosome tethering (CORVET) complex composed of at least Vps8, dor/Vps18, car/Vps33A and Vps16A; unlike in other species, Vps11 is not part of the Drosophila complex. Due to the reduced number of components the Drosophila CORVET complex is often referred to as the miniCORVET complex. The tethering complex core made up of Vps16A, car/Vps33A and dor/Vps18 and shared by both HOPS and CORVET, preferentially associates with CORVET-specific Vps8 over HOPS-specific lt/Vps41. Interacts with Rab2 (GTP-bound form).

It is found in the late endosome membrane. The protein resides in the lysosome membrane. It localises to the cytoplasmic vesicle. The protein localises to the autophagosome. Core component of the class C core vacuole/endosome tethering (CORVET) and the homotypic fusion and vacuole protein sorting (HOPS) tethering complexes involved in endo-lysosomal vesicle trafficking and lysosome biogenesis. The CORVET complex facilitates docking and fusion of endosomal vesicles during endosome maturation, acts upstream of HOPS, but is not involved in autophagic flux. The CORVET complex may cooperate with the early endosomal tether Rbsn-5 to mediate endosomal fusion. The HOPS complex facilitates docking and fusion of lysosomes with late endosomes and several other types of vesicles. The HOPS complex is also involved in autophagy and crinophagy (the elimination of unused secretory granules through their fusion with lysosomes). The HOPS complex mediates autophagocitic flux, probably by binding autophagosome-associated Syx17/syntaxin 17, promoting assembly of the trans-SNARE complex and instigating autophagosome-lysosome fusion. Independent of Syx17/syntaxin 17, HOPS is involved in biosynthetic transport to lysosomes and lysosome-related organelles such as eye-pigment granules. Required for endocytic degradation of boss/bride of sevenless and N/Notch in developing ommatidia. The sequence is that of Vacuolar protein sorting-associated protein 16 homolog from Drosophila melanogaster (Fruit fly).